Reading from the N-terminus, the 199-residue chain is 5'-deoxynucleotidase YfbR (199 aa).

Residues 18-19 (RW) and His-33 each bind substrate. The HD domain maps to 30–142 (VSEHSLQVAM…VKQADALCAY (113 aa)). A divalent metal cation is bound by residues His-33, His-68, and Asp-69. Residues Asp-69, 77–80 (DLPT), and Asp-137 contribute to the substrate site. A divalent metal cation is bound at residue Asp-137.

This sequence belongs to the 5DNU family. As to quaternary structure, homodimer. A divalent metal cation is required as a cofactor.

The protein localises to the cytoplasm. The catalysed reaction is a 2'-deoxyribonucleoside 5'-phosphate + H2O = a 2'-deoxyribonucleoside + phosphate. In terms of biological role, catalyzes the strictly specific dephosphorylation of 2'-deoxyribonucleoside 5'-monophosphates. This Shigella boydii serotype 18 (strain CDC 3083-94 / BS512) protein is 5'-deoxynucleotidase YfbR.